A 284-amino-acid chain; its full sequence is tRNA pseudouridine synthase A (284 aa).

Residue D62 is the Nucleophile of the active site. Y123 contacts substrate.

This sequence belongs to the tRNA pseudouridine synthase TruA family. In terms of assembly, homodimer.

The enzyme catalyses uridine(38/39/40) in tRNA = pseudouridine(38/39/40) in tRNA. Formation of pseudouridine at positions 38, 39 and 40 in the anticodon stem and loop of transfer RNAs. The protein is tRNA pseudouridine synthase A of Streptomyces griseus subsp. griseus (strain JCM 4626 / CBS 651.72 / NBRC 13350 / KCC S-0626 / ISP 5235).